A 211-amino-acid chain; its full sequence is Prolactin-1 (211 aa).

Positions 1–23 (MARRSQGTKLHLAVLCLVVSCHA) are cleaved as a signal peptide. 2 cysteine pairs are disulfide-bonded: cysteine 69–cysteine 184 and cysteine 201–cysteine 211.

This sequence belongs to the somatotropin/prolactin family.

The protein localises to the secreted. The polypeptide is Prolactin-1 (prl1) (Oncorhynchus keta (Chum salmon)).